Consider the following 540-residue polypeptide: Solute carrier family 22 member 7 (540 aa).

12 helical membrane passes run 21 to 41, 144 to 164, 172 to 192, 202 to 222, 232 to 252, 257 to 277, 344 to 364, 378 to 398, 402 to 422, 429 to 449, 462 to 484, and 488 to 510; these read LVLL…PIFM, VTST…GYLS, LLLV…ASVN, LTGS…LEWL, VIST…GYLI, WLLL…WWVP, VSLC…GLTL, LLFG…VRLV, LTEA…LLVS, ITAL…TAYL, TGMG…VVLL, and WLLL…VLLL.

Belongs to the major facilitator (TC 2.A.1) superfamily. Organic cation transporter (TC 2.A.1.19) family. As to expression, abundant expression in male and female kidney. In kidney, expressed at the brush border of the proximal tubule S3 segment (S3) in the outer stripe and medullary rays. In kidney, expression is higher in female than male. Also expressed in female liver.

It localises to the basolateral cell membrane. The protein resides in the apical cell membrane. Its subcellular location is the cell membrane. The catalysed reaction is orotate(out) + L-glutamate(in) = orotate(in) + L-glutamate(out). It catalyses the reaction 3',5'-cyclic GMP(in) = 3',5'-cyclic GMP(out). The enzyme catalyses GMP(in) = GMP(out). It carries out the reaction 2'-deoxyguanosine(in) = 2'-deoxyguanosine(out). The catalysed reaction is GDP(in) = GDP(out). It catalyses the reaction guanosine(in) = guanosine(out). The enzyme catalyses GTP(in) = GTP(out). It carries out the reaction 3',5'-cyclic AMP(in) = 3',5'-cyclic AMP(out). The catalysed reaction is creatinine(in) = creatinine(out). It catalyses the reaction prostaglandin E2(out) = prostaglandin E2(in). The enzyme catalyses 2-oxoglutarate(in) = 2-oxoglutarate(out). It carries out the reaction glutarate(in) = glutarate(out). The catalysed reaction is urate(out) = urate(in). It catalyses the reaction estrone 3-sulfate(out) = estrone 3-sulfate(in). In terms of biological role, functions as a Na(+)-independent bidirectional multispecific transporter. Contributes to the renal and hepatic elimination of endogenous organic compounds from the systemic circulation into the urine and bile, respectively. Capable of transporting a wide range of purine and pyrimidine nucleobases, nucleosides, and nucleotides with cGMP, 2'deoxyguanosine and GMP being the preferred substrates. Functions as a pH- and chloride-independent cGMP bidirectional facilitative transporter that can regulate both intracellular and extracellular levels of cGMP and may be involved in cGMP signaling pathways. Mediates orotate/glutamate bidirectional exchange and most likely display a physiological role in hepatic release of glutamate into the blood. Involved in renal secretion and possible reabsorption of creatinine. Able to uptake prostaglandin E2 (PGE2) and may contribute to PGE2 renal excretion. Also transports alpha-ketoglutarate and urate. Unlike human hortolog, able to transport glutarate. Apart from the orotate/glutamate exchange, the counterions for the uptake of other SLC22A7/OAT2 substrates remain to be identified. The protein is Solute carrier family 22 member 7 of Mus musculus (Mouse).